The chain runs to 110 residues: Cell cycle protein GpsB (110 aa).

A coiled-coil region spans residues Leu-32–Ser-73.

Belongs to the GpsB family. In terms of assembly, forms polymers through the coiled coil domains. Interacts with PBP1, MreC and EzrA.

The protein resides in the cytoplasm. Functionally, divisome component that associates with the complex late in its assembly, after the Z-ring is formed, and is dependent on DivIC and PBP2B for its recruitment to the divisome. Together with EzrA, is a key component of the system that regulates PBP1 localization during cell cycle progression. Its main role could be the removal of PBP1 from the cell pole after pole maturation is completed. Also contributes to the recruitment of PBP1 to the division complex. Not essential for septum formation. The polypeptide is Cell cycle protein GpsB (Streptococcus agalactiae serotype Ia (strain ATCC 27591 / A909 / CDC SS700)).